Consider the following 196-residue polypeptide: Gastrula zinc finger protein xLCGF3.1 (196 aa).

C2H2-type zinc fingers lie at residues 6–28 (FMCT…HMTH), 34–56 (FTCT…QTIH), 62–84 (FTCI…YMTH), 90–112 (FTCT…QTMH), 118–140 (LTCT…QRVH), 146–168 (FTCT…QTVH), and 174–196 (FTCT…QIVH).

Belongs to the krueppel C2H2-type zinc-finger protein family.

The protein localises to the nucleus. May be involved in transcriptional regulation. This chain is Gastrula zinc finger protein xLCGF3.1, found in Xenopus laevis (African clawed frog).